We begin with the raw amino-acid sequence, 507 residues long: Pyruvate kinase (507 aa).

Arginine 50 serves as a coordination point for substrate. Residues asparagine 52, serine 54, aspartate 84, and threonine 85 each coordinate K(+). ATP is bound at residue 52–55; it reads NFSH. Positions 91 and 177 each coordinate ATP. Mg(2+) is bound at residue glutamate 242. Substrate contacts are provided by glycine 265, aspartate 266, and threonine 298. Residue aspartate 266 coordinates Mg(2+).

This sequence belongs to the pyruvate kinase family. Homotetramer. Requires Mg(2+) as cofactor. K(+) serves as cofactor.

The catalysed reaction is pyruvate + ATP = phosphoenolpyruvate + ADP + H(+). It functions in the pathway carbohydrate degradation; glycolysis; pyruvate from D-glyceraldehyde 3-phosphate: step 5/5. This Dictyostelium discoideum (Social amoeba) protein is Pyruvate kinase (pyk).